The following is a 1040-amino-acid chain: uncharacterized protein (1040 aa).

Positions 403 to 588 (RLEESSKKGG…YSLIKFLRIK (186 aa)) constitute a Helicase ATP-binding domain. Residue 416–423 (DDMGLGKT) coordinates ATP. Residues 746–798 (CSLCMDVVAELLIIVPCGHFLCRECLTHVITSSEDMAKQTSNENISPKCSVCE) form an RING-type zinc finger. The Helicase C-terminal domain maps to 866-1032 (KIEKALNAVK…ISRLNTKELS (167 aa)).

This sequence belongs to the SNF2/RAD54 helicase family.

The protein localises to the nucleus. This is an uncharacterized protein from Schizosaccharomyces pombe (strain 972 / ATCC 24843) (Fission yeast).